The sequence spans 2610 residues: E3 ubiquitin-protein ligase HECTD1 (2610 aa).

Residues 246-269 (TVSGPSSACKPGRSTTGAPSTTAD) are disordered. A compositionally biased stretch (polar residues) spans 258-269 (RSTTGAPSTTAD). 4 ANK repeats span residues 395-424 (VGQT…DVNR), 426-455 (QRSS…NPDL), 459-491 (DGKT…PVNK), and 579-612 (ITAT…DIFL). Residues 489–513 (VNKGDDKKKKDTNKDEEECNEPKGD) are disordered. The span at 491–501 (KGDDKKKKDTN) shows a compositional bias: basic and acidic residues. 2 disordered regions span residues 627–657 (LAGP…ELQQ) and 707–748 (SSGS…LSAP). Phosphoserine is present on residues serine 631 and serine 640. Positions 639 to 657 (ESKPEKEDEPQEDAKELQQ) are enriched in basic and acidic residues. The span at 707 to 717 (SSGSPEGGSDS) shows a compositional bias: low complexity. Over residues 718–729 (SESRSEFLEKLQ) the composition is skewed to basic and acidic residues. Positions 1266 to 1338 (VRSQVLKYMV…KFDLKLAPGY (73 aa)) constitute an MIB/HERC2 domain. 2 disordered regions span residues 1343-1406 (VASP…KTER) and 1433-1483 (ENVP…SMGI). Positions 1348–1365 (PVSSTVSGTTQSWSSLVK) are enriched in polar residues. Composition is skewed to low complexity over residues 1373 to 1395 (SAAA…ASSS) and 1441 to 1458 (GSSS…TGSE). Serine 1384 bears the Phosphoserine mark. Residues 1469 to 1479 (SVRTPGESSAI) show a composition bias toward polar residues. Serine 1488 carries the post-translational modification Phosphoserine. The interval 1496-1515 (ELTNKEAASQRPLSSSASNR) is disordered. Serine 1567 carries the phosphoserine modification. 2 disordered regions span residues 1592–1611 (GAQS…VTMS) and 1674–1757 (ELDD…KGGR). Over residues 1600-1611 (TTPGTTSTVTMS) the composition is skewed to low complexity. Over residues 1674–1703 (ELDDDEDLPEPDEEDDENEDDNQEDQEYEE) the composition is skewed to acidic residues. Threonine 1760 is modified (phosphothreonine). Phosphoserine is present on serine 1772. The segment at 1777 to 1797 (AFDPRPGRTNVQQTTDLEIPP) is disordered. Positions 2029–2103 (FTFPPDEFTS…AIVWLQNRRE (75 aa)) are K-box. Residues 2151–2610 (IHADRKSVLE…ATMEKGFHLN (460 aa)) form the HECT domain. The tract at residues 2297–2318 (HCTESQSEASTEEGHDSLSVGS) is disordered. A Phosphoserine modification is found at serine 2318. The active-site Glycyl thioester intermediate is the cysteine 2579.

The protein belongs to the UPL family. K-HECT subfamily. Interacts with IGSF1.

The enzyme catalyses S-ubiquitinyl-[E2 ubiquitin-conjugating enzyme]-L-cysteine + [acceptor protein]-L-lysine = [E2 ubiquitin-conjugating enzyme]-L-cysteine + N(6)-ubiquitinyl-[acceptor protein]-L-lysine.. Its pathway is protein modification; protein ubiquitination. In terms of biological role, E3 ubiquitin-protein ligase which accepts ubiquitin from an E2 ubiquitin-conjugating enzyme in the form of a thioester and then directly transfers the ubiquitin to targeted substrates. Mediates 'Lys-63'-linked polyubiquitination of HSP90AA1 which leads to its intracellular localization and reduced secretion. Negatively regulating HSP90AA1 secretion in cranial mesenchyme cells may impair their emigration and may be essential for the correct development of the cranial neural folds and neural tube closure. Catalyzes ubiquitination and degradation of ZNF622, an assembly factor for the ribosomal 60S subunit, in hematopoietic cells, thereby promoting hematopoietic stem cell renewal. In Homo sapiens (Human), this protein is E3 ubiquitin-protein ligase HECTD1.